The sequence spans 556 residues: Potassium-transporting ATPase potassium-binding subunit (556 aa).

Helical transmembrane passes span 6-26 (AGILFALSLALALAAVHVPLG), 65-85 (SVLAFSAVSILFLFGLQLLQG), 133-153 (GLSVQNFVSAAVGMAVAMAFV), 176-196 (LRILLPLSIIGAIILVSGGVI), 249-269 (PTTWTNWVEIFLLSCIAFSLP), 283-303 (AAILAVMAVIATLSLSLMMLF), 378-398 (GLYSMLVLAVITVFVAGLMVG), 419-439 (YFLVTPLIVLIGTAVAMALPG), 483-503 (ALGLAMVFGRFLPIILVLALA), and 526-546 (FVGMVTGVTLILVALTFLPVL).

It belongs to the KdpA family. As to quaternary structure, the system is composed of three essential subunits: KdpA, KdpB and KdpC.

Its subcellular location is the cell membrane. In terms of biological role, part of the high-affinity ATP-driven potassium transport (or Kdp) system, which catalyzes the hydrolysis of ATP coupled with the electrogenic transport of potassium into the cytoplasm. This subunit binds the extracellular potassium ions and delivers the ions to the membrane domain of KdpB through an intramembrane tunnel. The chain is Potassium-transporting ATPase potassium-binding subunit from Mycobacterium sp. (strain KMS).